We begin with the raw amino-acid sequence, 357 residues long: Phenylalanine--tRNA ligase alpha subunit (357 aa).

Position 257 (Glu257) interacts with Mg(2+).

Belongs to the class-II aminoacyl-tRNA synthetase family. Phe-tRNA synthetase alpha subunit type 1 subfamily. Tetramer of two alpha and two beta subunits. Requires Mg(2+) as cofactor.

The protein resides in the cytoplasm. The catalysed reaction is tRNA(Phe) + L-phenylalanine + ATP = L-phenylalanyl-tRNA(Phe) + AMP + diphosphate + H(+). This is Phenylalanine--tRNA ligase alpha subunit from Roseobacter denitrificans (strain ATCC 33942 / OCh 114) (Erythrobacter sp. (strain OCh 114)).